The chain runs to 1433 residues: Regulatory protein CAT8 (1433 aa).

Residues 20–38 (GSQALSGPSISNRTSSSEA) show a composition bias toward polar residues. The segment at 20 to 40 (GSQALSGPSISNRTSSSEANP) is disordered. The segment at residues 70–97 (CDRCRSKKTRCDGKRPQCSQCAAVGFEC) is a DNA-binding region (zn(2)-C6 fungal-type). Positions 936–946 (KPLFGSQSKNS) are enriched in polar residues. Disordered stretches follow at residues 936–1024 (KPLF…DTKK), 1137–1162 (QNPE…NNLS), 1200–1236 (SASA…ILGS), and 1324–1433 (LNPT…QNAK). Basic and acidic residues-rich tracts occupy residues 947–965 (LENR…EHEY) and 994–1005 (LKYEKDAKRNAK). 3 stretches are compositionally biased toward polar residues: residues 1138–1162 (NPEN…NNLS), 1221–1235 (PPST…SILG), and 1326–1348 (PTDS…SNQR). The span at 1349–1362 (SLSSGNDSKGDSSS) shows a compositional bias: low complexity. Composition is skewed to polar residues over residues 1363–1391 (QENS…SGPS) and 1418–1433 (SNTD…QNAK).

Post-translationally, could be the target of the SNF1/CAT1 - SNF4/CAT3 kinase complex.

Its subcellular location is the nucleus. In terms of biological role, activator of the gluconeogenic enzymes FBP1 and PCK1 genes. The sequence is that of Regulatory protein CAT8 (CAT8) from Saccharomyces cerevisiae (strain ATCC 204508 / S288c) (Baker's yeast).